The chain runs to 299 residues: Oxygen-dependent coproporphyrinogen-III oxidase (299 aa).

Serine 92 contacts substrate. A divalent metal cation contacts are provided by histidine 96 and histidine 106. Residue histidine 106 is the Proton donor of the active site. Asparagine 108–arginine 110 provides a ligand contact to substrate. A divalent metal cation is bound by residues histidine 145 and histidine 175. An important for dimerization region spans residues tyrosine 240–glutamate 275. Glycine 258–arginine 260 is a binding site for substrate.

It belongs to the aerobic coproporphyrinogen-III oxidase family. Homodimer. Requires a divalent metal cation as cofactor.

The protein localises to the cytoplasm. It carries out the reaction coproporphyrinogen III + O2 + 2 H(+) = protoporphyrinogen IX + 2 CO2 + 2 H2O. It participates in porphyrin-containing compound metabolism; protoporphyrin-IX biosynthesis; protoporphyrinogen-IX from coproporphyrinogen-III (O2 route): step 1/1. In terms of biological role, involved in the heme biosynthesis. Catalyzes the aerobic oxidative decarboxylation of propionate groups of rings A and B of coproporphyrinogen-III to yield the vinyl groups in protoporphyrinogen-IX. The protein is Oxygen-dependent coproporphyrinogen-III oxidase of Salmonella enteritidis PT4 (strain P125109).